Consider the following 137-residue polypeptide: MGAFPSPPPWGWSTGFITTPLTTGRLPSQHLDPALPKLFWFTPTLPTCPTVAKQFWDTKRTSPDGNLKVANLPSFAISFATAPAALANCPPLPRVISMLCMAVPKGISVEVDSSFLSKNPFPNCTSFFQSIRLSRCI.

Belongs to the ycf72 family.

Its subcellular location is the plastid. It is found in the chloroplast. This is an uncharacterized protein from Saccharum hybrid (Sugarcane).